We begin with the raw amino-acid sequence, 225 residues long: Ribonuclease T (225 aa).

The tract at residues 1 to 21 is disordered; it reads MSEDHFDDEHEGHGGGGGSRH. Residues 33–207 enclose the Exonuclease domain; the sequence is VVVDVETGGF…YDTEKTAELF (175 aa). Residues Asp36, Glu38, His194, and Asp199 each contribute to the Mg(2+) site. The active-site Proton donor/acceptor is His194.

Belongs to the RNase T family. Homodimer. It depends on Mg(2+) as a cofactor.

Its function is as follows. Trims short 3' overhangs of a variety of RNA species, leaving a one or two nucleotide 3' overhang. Responsible for the end-turnover of tRNA: specifically removes the terminal AMP residue from uncharged tRNA (tRNA-C-C-A). Also appears to be involved in tRNA biosynthesis. This is Ribonuclease T from Pseudomonas syringae pv. syringae (strain B728a).